The sequence spans 144 residues: Large ribosomal subunit protein uL15 (144 aa).

The segment at 1 to 62 (MELNNLKPAE…GQMPLQRRLP (62 aa)) is disordered. Residues 21–31 (RGIGSGLGKTA) are compositionally biased toward gly residues.

It belongs to the universal ribosomal protein uL15 family. As to quaternary structure, part of the 50S ribosomal subunit.

In terms of biological role, binds to the 23S rRNA. The polypeptide is Large ribosomal subunit protein uL15 (Paraburkholderia phymatum (strain DSM 17167 / CIP 108236 / LMG 21445 / STM815) (Burkholderia phymatum)).